Reading from the N-terminus, the 98-residue chain is NADH-ubiquinone oxidoreductase chain 4L (98 aa).

Transmembrane regions (helical) follow at residues 2 to 22, 29 to 49, and 61 to 81; these read LSISININLAFAAALLGMLMF, SLLCLEGMMLSMFILSTLIIL, and ILLLVFAACEAAIGLALLVMV.

It belongs to the complex I subunit 4L family. As to quaternary structure, core subunit of respiratory chain NADH dehydrogenase (Complex I) which is composed of 45 different subunits.

The protein localises to the mitochondrion inner membrane. The catalysed reaction is a ubiquinone + NADH + 5 H(+)(in) = a ubiquinol + NAD(+) + 4 H(+)(out). Core subunit of the mitochondrial membrane respiratory chain NADH dehydrogenase (Complex I) which catalyzes electron transfer from NADH through the respiratory chain, using ubiquinone as an electron acceptor. Part of the enzyme membrane arm which is embedded in the lipid bilayer and involved in proton translocation. This chain is NADH-ubiquinone oxidoreductase chain 4L (MT-ND4L), found in Microcebus ravelobensis (Golden-brown mouse lemur).